The chain runs to 186 residues: MKIAQELRAGNVVMIGKDPMVVQKAEFSKSGRNASVVKMKLKNLLTGAGMESVYRADDKFDTVTLDRKECTYSYFADPLYVFMDSDYNQYEVEGDNLGDALNYLDDGMPVEVVFYEGKAISVEMPTTVIREVEYTEPAVRGDTSGKVMKPARIKPTGFELPVAAFVEIGDMIEIDTRTNEFKRRAN.

This sequence belongs to the elongation factor P family.

It is found in the cytoplasm. It participates in protein biosynthesis; polypeptide chain elongation. Involved in peptide bond synthesis. Stimulates efficient translation and peptide-bond synthesis on native or reconstituted 70S ribosomes in vitro. Probably functions indirectly by altering the affinity of the ribosome for aminoacyl-tRNA, thus increasing their reactivity as acceptors for peptidyl transferase. The protein is Elongation factor P of Thiobacillus denitrificans (strain ATCC 25259 / T1).